The following is a 172-amino-acid chain: Nicotinamide-nucleotide adenylyltransferase (172 aa).

Belongs to the archaeal NMN adenylyltransferase family.

It localises to the cytoplasm. The catalysed reaction is beta-nicotinamide D-ribonucleotide + ATP + H(+) = diphosphate + NAD(+). The protein operates within cofactor biosynthesis; NAD(+) biosynthesis; NAD(+) from nicotinamide D-ribonucleotide: step 1/1. This chain is Nicotinamide-nucleotide adenylyltransferase, found in Methanococcus vannielii (strain ATCC 35089 / DSM 1224 / JCM 13029 / OCM 148 / SB).